The chain runs to 578 residues: Protein SIA1 (578 aa).

An N-terminal signal peptide occupies residues 1–28 (MFRNRRILLYARRFFLVWICFLFITSWS).

May be involved in the activation of the plasma membrane proton-ATPase by glucose. This chain is Protein SIA1 (SIA1), found in Kluyveromyces lactis (strain ATCC 8585 / CBS 2359 / DSM 70799 / NBRC 1267 / NRRL Y-1140 / WM37) (Yeast).